The chain runs to 488 residues: GTPase Der (488 aa).

2 consecutive EngA-type G domains span residues 3 to 166 (PVVA…AEAM) and 199 to 372 (IKLA…DSAT). GTP-binding positions include 9-16 (GRPNVGKS), 56-60 (DTGGI), 118-121 (NKVD), 205-212 (GKPNVGKS), 252-256 (DTAGV), and 317-320 (NKWD). A KH-like domain is found at 373-457 (RRVSTSMLTR…PIQLRFQEGD (85 aa)). The segment at 469–488 (MSQERRRKRALSHIKDRKTK) is disordered. Basic residues predominate over residues 473–488 (RRRKRALSHIKDRKTK).

Belongs to the TRAFAC class TrmE-Era-EngA-EngB-Septin-like GTPase superfamily. EngA (Der) GTPase family. As to quaternary structure, associates with the 50S ribosomal subunit.

GTPase that plays an essential role in the late steps of ribosome biogenesis. This Shewanella putrefaciens (strain CN-32 / ATCC BAA-453) protein is GTPase Der.